The chain runs to 542 residues: 1-aminocyclopropane-1-carboxylate synthase 6 (542 aa).

The segment at 1–28 is disordered; that stretch reads MRRSGNGGAAKKKKKRSASAASERRPRA. K379 carries the N6-(pyridoxal phosphate)lysine modification.

This sequence belongs to the class-I pyridoxal-phosphate-dependent aminotransferase family. Pyridoxal 5'-phosphate serves as cofactor. As to expression, expressed in leaves.

The protein localises to the plastid. It localises to the amyloplast membrane. It carries out the reaction S-adenosyl-L-methionine = 1-aminocyclopropane-1-carboxylate + S-methyl-5'-thioadenosine + H(+). The protein operates within alkene biosynthesis; ethylene biosynthesis via S-adenosyl-L-methionine; ethylene from S-adenosyl-L-methionine: step 1/2. In terms of biological role, catalyzes the formation of 1-aminocyclopropane-1-carboxylate, a direct precursor of ethylene in higher plants. Required for the regulation of starch grain size in endosperm. This is 1-aminocyclopropane-1-carboxylate synthase 6 from Oryza sativa subsp. japonica (Rice).